The primary structure comprises 369 residues: uncharacterized protein (369 aa).

4 disordered regions span residues 1–42 (MRAA…NNNS), 60–107 (PSDL…KEDD), 146–177 (ALSM…NSSG), and 214–369 (LSSH…GDDD). Positions 12 to 24 (VGPNNNNQSNTIN) are enriched in polar residues. 2 stretches are compositionally biased toward low complexity: residues 30 to 42 (SNSN…NNNS) and 70 to 86 (YHSN…NSSS). The span at 87 to 101 (AITSGTVAPSSSMNN) shows a compositional bias: polar residues. A compositionally biased stretch (acidic residues) spans 155–169 (DSESDISEKEDDNDG). The segment covering 219 to 324 (NNNNNSSNNN…NNNNNNSNIY (106 aa)) has biased composition (low complexity).

This is an uncharacterized protein from Dictyostelium discoideum (Social amoeba).